The sequence spans 1145 residues: Protein STU1 (1145 aa).

HEAT repeat units lie at residues 96–134 (TLPL…EKYV) and 168–206 (YVPV…KSDL). 3 disordered regions span residues 226–271 (ELIP…GIDT), 510–793 (LLNK…VVDP), and 816–839 (PEPV…PAAS). Positions 229–239 (PTSSRPETPAA) are enriched in low complexity. Over residues 535–545 (SKSTMGTSKPS) the composition is skewed to polar residues. Composition is skewed to low complexity over residues 580 to 594 (TTTT…SGAR), 663 to 676 (ASHA…SPSS), and 696 to 708 (QSQS…SSPS).

The protein belongs to the CLASP family. Interacts with microtubules.

The protein localises to the cytoplasm. It localises to the cytoskeleton. The protein resides in the nucleus. It is found in the spindle. Functionally, microtubule binding protein that promotes the stabilization of dynamic microtubules. Required for mitotic spindle formation. The protein is Protein STU1 (STU1) of Gibberella zeae (strain ATCC MYA-4620 / CBS 123657 / FGSC 9075 / NRRL 31084 / PH-1) (Wheat head blight fungus).